The following is a 262-amino-acid chain: Serine/arginine-rich splicing factor 10 (262 aa).

The RRM domain occupies 10 to 88 (TSLFVRNVAD…RQIEIQFAQG (79 aa)). Phosphoserine is present on residues Ser23, Ser106, and Ser108. A compositionally biased stretch (basic and acidic residues) spans 116 to 126 (YRRSRSRSYER). Residues 116-262 (YRRSRSRSYE…SWTSPKSSGH (147 aa)) are disordered. Residues Ser129, Ser131, and Ser133 each carry the phosphoserine modification. Low complexity predominate over residues 134 to 150 (FDYNYRRSYSPRNSRPT). Phosphoserine is present on residues Ser158, Ser160, and Arg168. Basic residues-rich tracts occupy residues 165-186 (FKHR…SKSQ) and 194-207 (KSRS…KTRG). Basic and acidic residues predominate over residues 209–234 (SKTDSKTHYKSGSRYEKESRKKEPPR). Residues 252–262 (RSWTSPKSSGH) are compositionally biased toward low complexity.

Belongs to the splicing factor SR family. The phosphorylated but not the dephosphorylated form interacts with TRA2B/SFRS10. The dephosphorylated form interacts with SNRNP70. Isoform 1 interacts with FUS C-terminus. Isoform 3 interacts with FUS C-terminus. Interacts with YTHDC1, leading to inhibit RNA-binding activity of SRSF10. Post-translationally, phosphorylated. Fully dephosphorylated in mitosis and partially dephosphorylated on heat shock. In terms of tissue distribution, widely expressed.

The protein localises to the nucleus speckle. It localises to the cytoplasm. In terms of biological role, splicing factor that in its dephosphorylated form acts as a general repressor of pre-mRNA splicing. Seems to interfere with the U1 snRNP 5'-splice recognition of SNRNP70. Required for splicing repression in M-phase cells and after heat shock. Also acts as a splicing factor that specifically promotes exon skipping during alternative splicing. Interaction with YTHDC1, a RNA-binding protein that recognizes and binds N6-methyladenosine (m6A)-containing RNAs, prevents SRSF10 from binding to its mRNA-binding sites close to m6A-containing regions, leading to inhibit exon skipping during alternative splicing. May be involved in regulation of alternative splicing in neurons, with isoform 1 acting as a positive and isoform 3 as a negative regulator. The protein is Serine/arginine-rich splicing factor 10 (SRSF10) of Homo sapiens (Human).